Reading from the N-terminus, the 416-residue chain is CinA-like protein (416 aa).

The protein belongs to the CinA family.

This is CinA-like protein from Synechocystis sp. (strain ATCC 27184 / PCC 6803 / Kazusa).